Reading from the N-terminus, the 75-residue chain is uncharacterized protein (75 aa).

The next 2 membrane-spanning stretches (helical) occupy residues 5–25 (VIICLLFTYYVIWSLLPIFEI) and 42–62 (VAIFLPIFLLLIGFTLTGSVL).

The protein resides in the membrane. This is an uncharacterized protein from Saccharomyces cerevisiae (strain ATCC 204508 / S288c) (Baker's yeast).